A 322-amino-acid polypeptide reads, in one-letter code: Daunorubicin resistance ATP-binding protein DrrA2 (322 aa).

Positions 6-236 (VRAEAMEKRY…VGGDRIEVVV (231 aa)) constitute an ABC transporter domain. 38–45 (GPNGAGKT) is an ATP binding site.

Belongs to the ABC transporter superfamily. Drug exporter-1 (DrugE1) (TC 3.A.1.105) family. In terms of assembly, the complex is probably composed of two ATP-binding proteins (DrrA2) and two transmembrane proteins (DrrB2).

It is found in the cell membrane. It catalyses the reaction daunorubicin(in) + ATP + H2O = daunorubicin(out) + ADP + phosphate + H(+). In terms of biological role, part of the ABC transporter complex DrrA2B2 involved in daunorubicin efflux. Responsible for energy coupling to the transport system. Confers self-resistance to daunorubicin, an antibiotic produced by S.coeruleorubidus. This chain is Daunorubicin resistance ATP-binding protein DrrA2, found in Streptomyces coeruleorubidus.